Reading from the N-terminus, the 128-residue chain is Fluoride-specific ion channel FluC (128 aa).

Helical transmembrane passes span 5–25 (IVAI…LSIG), 35–55 (LGTL…VVAF), 67–87 (LFVI…SVEV), and 96–116 (FGWA…LTGL). Na(+)-binding residues include Gly-75 and Thr-78.

The protein belongs to the fluoride channel Fluc/FEX (TC 1.A.43) family.

It is found in the cell inner membrane. The catalysed reaction is fluoride(in) = fluoride(out). Its activity is regulated as follows. Na(+) is not transported, but it plays an essential structural role and its presence is essential for fluoride channel function. In terms of biological role, fluoride-specific ion channel. Important for reducing fluoride concentration in the cell, thus reducing its toxicity. The chain is Fluoride-specific ion channel FluC from Burkholderia thailandensis (strain ATCC 700388 / DSM 13276 / CCUG 48851 / CIP 106301 / E264).